The chain runs to 325 residues: Quinolinate synthase (325 aa).

Residues His41 and Ser58 each coordinate iminosuccinate. Cys103 contacts [4Fe-4S] cluster. Iminosuccinate contacts are provided by residues 129–131 (YIN) and Ser146. [4Fe-4S] cluster is bound at residue Cys189. Residues 215–217 (HPE) and Thr232 contribute to the iminosuccinate site. Cys282 provides a ligand contact to [4Fe-4S] cluster.

Belongs to the quinolinate synthase family. Type 2 subfamily. It depends on [4Fe-4S] cluster as a cofactor.

It localises to the cytoplasm. The enzyme catalyses iminosuccinate + dihydroxyacetone phosphate = quinolinate + phosphate + 2 H2O + H(+). It functions in the pathway cofactor biosynthesis; NAD(+) biosynthesis; quinolinate from iminoaspartate: step 1/1. Functionally, catalyzes the condensation of iminoaspartate with dihydroxyacetone phosphate to form quinolinate. This Rippkaea orientalis (strain PCC 8801 / RF-1) (Cyanothece sp. (strain PCC 8801)) protein is Quinolinate synthase.